We begin with the raw amino-acid sequence, 504 residues long: Terminase, large subunit (504 aa).

Residues 1–204 (MTRGERVIAF…LSIWIDDAVK (204 aa)) are ATPase activity. The Walker A motif signature appears at 54–61 (IARKNGKT). The Walker B motif signature appears at 149 to 154 (LAILDE). The tract at residues 326-415 (FPFFWTPQKT…LPLVEFGQGF (90 aa)) is nuclease activity. Asp471 serves as a coordination point for Mg(2+).

Belongs to the Hendrixvirinae large terminase family. In terms of assembly, homopentamer; forms a ring-like structure through which genomic DNA is translocated into the capsid. Interacts with the terminase small subunit; the active complex is composed of a pentamer ring of terminase large subunits and a nonamer ring of terminase small subunits. Interacts with the portal protein; this interaction allows the packaging of viral DNA. It depends on Mg(2+) as a cofactor. Requires Mn(2+) as cofactor.

Inhibited by zinc. The terminase large subunit acts as an ATP driven molecular motor necessary for viral DNA translocation into empty capsids and as an endonuclease that cuts the viral genome from the concetamer to initiate and to end a packaging reaction. The terminase lies at a unique vertex of the procapsid and is composed of two subunits, a small terminase subunit involved in viral DNA recognition (packaging sequence), and a large terminase subunit possessing endonucleolytic and ATPase activities. Both terminase subunits heterooligomerize and are docked on the portal protein to form the packaging machine. Packaging initiates by TerS recognizing the packaging sequence in the viral DNA. The nuclease activity of TerL cuts the viral DNA and the terminase-DNA complex binds to the portal of a procapsid shell. DNA is translocated into the capsid, powered by the packaging ATPase in TerL, which continues until the next site is encountered at which point the motor stops and again cuts the DNA to release the nucleocapsid filled with a unit-length genome ('unit length' packaging). This Escherichia coli (Bacteriophage HK97) protein is Terminase, large subunit (2).